The sequence spans 566 residues: KsdD-like steroid dehydrogenase Rv0785 (566 aa).

Position 23-54 (23-54 (DAIVVGAGLAGLVAACELADRGLRVLILDQEN)) interacts with FAD.

It belongs to the FAD-dependent oxidoreductase 2 family. The cofactor is FAD.

The protein operates within lipid metabolism; steroid biosynthesis. In terms of biological role, able to catalyze the elimination of the C-1 and C-2 hydrogen atoms of the A-ring from the polycyclic ring structure of 3-ketosteroids. The protein is KsdD-like steroid dehydrogenase Rv0785 of Mycobacterium tuberculosis (strain ATCC 25618 / H37Rv).